Consider the following 538-residue polypeptide: MTRECPSPAPGPGAPLSGSVLAEAAVVFAVVLSIHATVWDRYSWCAVALAVQAFYVQYKWDRLLQQGSAVFQFRMSANSGLLPASMVMPLLGLVMKERCQTAGNPFFERFGIVVAATGMAVALFSSVLALGITRPVPTNTCVILGLAGGVIIYIMKHSLSVGEVIEVLEVLLIFVYLNMILLYLLPRCFTPGEALLVLGGISFVLNQLIKRSLTLVESQGDPVDFFLLVVVVGMVLMGIFFSTLFVFMDSGTWASSIFFHLMTCVLSLGVVLPWLHRLIRRNPLLWLLQFLFQTDTRIYLLAYWSLLATLACLVVLYQNAKRSSSESKKHQAPTIARKYFHLIVVATYIPGIIFDRPLLYVAATVCLAVFIFLEYVRYFRIKPLGHTLRSFLSLFLDERDSGPLILTHIYLLLGMSLPIWLIPRPCTQKGSLGGARALVPYAGVLAVGVGDTVASIFGSTMGEIRWPGTKKTFEGTMTSIFAQIISVALILIFDSGVDLNYSYAWILGSISTVSLLEAYTTQIDNLLLPLYLLILLMA.

Residues 1 to 13 lie on the Lumenal side of the membrane; sequence MTRECPSPAPGPG. A helical transmembrane segment spans residues 14–34; the sequence is APLSGSVLAEAAVVFAVVLSI. Residues 35–74 are Cytoplasmic-facing; it reads HATVWDRYSWCAVALAVQAFYVQYKWDRLLQQGSAVFQFR. A helical transmembrane segment spans residues 75 to 95; the sequence is MSANSGLLPASMVMPLLGLVM. Residues 96 to 111 lie on the Lumenal side of the membrane; it reads KERCQTAGNPFFERFG. Residues 112 to 132 traverse the membrane as a helical segment; sequence IVVAATGMAVALFSSVLALGI. Over 133-134 the chain is Cytoplasmic; sequence TR. The chain crosses the membrane as a helical span at residues 135-155; sequence PVPTNTCVILGLAGGVIIYIM. Residues 156–163 are Lumenal-facing; the sequence is KHSLSVGE. A helical membrane pass occupies residues 164–184; it reads VIEVLEVLLIFVYLNMILLYL. The Cytoplasmic portion of the chain corresponds to 185 to 188; sequence LPRC. The helical transmembrane segment at 189 to 209 threads the bilayer; it reads FTPGEALLVLGGISFVLNQLI. The Lumenal portion of the chain corresponds to 210-224; the sequence is KRSLTLVESQGDPVD. A helical transmembrane segment spans residues 225–245; it reads FFLLVVVVGMVLMGIFFSTLF. Topologically, residues 246-254 are cytoplasmic; sequence VFMDSGTWA. Residues 255–275 form a helical membrane-spanning segment; it reads SSIFFHLMTCVLSLGVVLPWL. At 276 to 297 the chain is on the lumenal side; the sequence is HRLIRRNPLLWLLQFLFQTDTR. The chain crosses the membrane as a helical span at residues 298–318; it reads IYLLAYWSLLATLACLVVLYQ. Topologically, residues 319-337 are cytoplasmic; that stretch reads NAKRSSSESKKHQAPTIAR. Residues 338–354 form a helical membrane-spanning segment; the sequence is KYFHLIVVATYIPGIIF. Residues 355-359 are Lumenal-facing; it reads DRPLL. Residues 360-380 traverse the membrane as a helical segment; that stretch reads YVAATVCLAVFIFLEYVRYFR. Over 381–401 the chain is Cytoplasmic; sequence IKPLGHTLRSFLSLFLDERDS. Residues 402 to 422 traverse the membrane as a helical segment; that stretch reads GPLILTHIYLLLGMSLPIWLI. Residues 423 to 436 lie on the Lumenal side of the membrane; it reads PRPCTQKGSLGGAR. A helical membrane pass occupies residues 437–457; it reads ALVPYAGVLAVGVGDTVASIF. The Cytoplasmic segment spans residues 458–472; the sequence is GSTMGEIRWPGTKKT. The segment at 459–474 is CTP-binding; sequence STMGEIRWPGTKKTFE. The chain crosses the membrane as a helical span at residues 473 to 493; the sequence is FEGTMTSIFAQIISVALILIF. The Lumenal segment spans residues 494 to 495; sequence DS. A helical membrane pass occupies residues 496 to 516; the sequence is GVDLNYSYAWILGSISTVSLL. Over 517-538 the chain is Cytoplasmic; it reads EAYTTQIDNLLLPLYLLILLMA.

The protein belongs to the polyprenol kinase family. In terms of tissue distribution, ubiquitous.

It localises to the endoplasmic reticulum membrane. It carries out the reaction a di-trans,poly-cis-dolichol + CTP = a di-trans,poly-cis-dolichyl phosphate + CDP + H(+). The protein operates within protein modification; protein glycosylation. Functionally, catalyzes CTP-mediated phosphorylation of dolichol, the terminal step in de novo dolichyl monophosphate (Dol-P) biosynthesis. Dol-P is a lipid carrier essential for the synthesis of N-linked and O-linked oligosaccharides and for GPI anchors. This chain is Dolichol kinase (DOLK), found in Homo sapiens (Human).